Consider the following 90-residue polypeptide: Probable Fe(2+)-trafficking protein (90 aa).

The protein belongs to the Fe(2+)-trafficking protein family.

Its function is as follows. Could be a mediator in iron transactions between iron acquisition and iron-requiring processes, such as synthesis and/or repair of Fe-S clusters in biosynthetic enzymes. The chain is Probable Fe(2+)-trafficking protein from Methylococcus capsulatus (strain ATCC 33009 / NCIMB 11132 / Bath).